Reading from the N-terminus, the 31-residue chain is Mycofactocin precursor peptide (31 aa).

Belongs to the mycofactocin precursor peptide family. In terms of processing, the post-translational modifications that lead to mycofactocin involve oxidative decarboxylation of the C-terminal tyrosine residue catalyzed by MftC, introduction of a tyramine-valine cross-link, removal of the modified C-terminal dipeptide by MftE. The released dipeptide then undergoes oxidative deamination by MftD, glycosylation by MftF and methylation by an unknown enzyme.

Precursor peptide that leads to mycofactocin (MFT) after extensive post-translational modifications by enzymes encoded by adjacent genes. Mycofactocin acts as a redox cofactor of nicotinamide-dependent oxidoreductases encoded in the same locus. Is required for the in vivo ethanol assimilation in M.smegmatis. This Mycolicibacterium smegmatis (strain ATCC 700084 / mc(2)155) (Mycobacterium smegmatis) protein is Mycofactocin precursor peptide.